We begin with the raw amino-acid sequence, 313 residues long: Tyrosine recombinase slr0733 (313 aa).

The region spanning 7-101 (NNLSGLNQNI…AIKSLVNYAR (95 aa)) is the Core-binding (CB) domain. One can recognise a Tyr recombinase domain in the interval 122-307 (RDTTGVSPTS…RHQHQAQITD (186 aa)). Catalysis depends on residues arginine 162, lysine 188, histidine 258, arginine 261, and histidine 285. Tyrosine 294 (O-(3'-phospho-DNA)-tyrosine intermediate) is an active-site residue.

This sequence belongs to the 'phage' integrase family.

The protein localises to the cytoplasm. Functionally, site-specific tyrosine recombinase, which acts by catalyzing the cutting and rejoining of the recombining DNA molecules. In Synechocystis sp. (strain ATCC 27184 / PCC 6803 / Kazusa), this protein is Tyrosine recombinase slr0733.